The primary structure comprises 448 residues: Tubulin beta chain (448 aa).

GTP contacts are provided by Gln11, Glu69, Ser138, Gly142, Thr143, Gly144, Asn204, and Asn226. Glu69 provides a ligand contact to Mg(2+). The interval 429–448 (SISDGEEQPYAEEAAYEAEE) is disordered. The span at 432 to 448 (DGEEQPYAEEAAYEAEE) shows a compositional bias: acidic residues.

Belongs to the tubulin family. Dimer of alpha and beta chains. A typical microtubule is a hollow water-filled tube with an outer diameter of 25 nm and an inner diameter of 15 nM. Alpha-beta heterodimers associate head-to-tail to form protofilaments running lengthwise along the microtubule wall with the beta-tubulin subunit facing the microtubule plus end conferring a structural polarity. Microtubules usually have 13 protofilaments but different protofilament numbers can be found in some organisms and specialized cells. Mg(2+) is required as a cofactor.

It localises to the cytoplasm. The protein resides in the cytoskeleton. Tubulin is the major constituent of microtubules, a cylinder consisting of laterally associated linear protofilaments composed of alpha- and beta-tubulin heterodimers. Microtubules grow by the addition of GTP-tubulin dimers to the microtubule end, where a stabilizing cap forms. Below the cap, tubulin dimers are in GDP-bound state, owing to GTPase activity of alpha-tubulin. This Aspergillus fumigatus (strain ATCC MYA-4609 / CBS 101355 / FGSC A1100 / Af293) (Neosartorya fumigata) protein is Tubulin beta chain.